A 100-amino-acid polypeptide reads, in one-letter code: Small ribosomal subunit protein uS14c (100 aa).

Belongs to the universal ribosomal protein uS14 family. Part of the 30S ribosomal subunit.

It is found in the plastid. Its subcellular location is the chloroplast. In terms of biological role, binds 16S rRNA, required for the assembly of 30S particles. This Illicium oligandrum (Star anise) protein is Small ribosomal subunit protein uS14c.